The primary structure comprises 43 residues: Potassium channel toxin gamma-KTx 4.11 (43 aa).

Intrachain disulfides connect Cys5–Cys23, Cys11–Cys34, Cys20–Cys39, and Cys24–Cys41.

This sequence belongs to the ergtoxin family. Gamma-KTx 4 subfamily. In terms of tissue distribution, expressed by the venom gland.

Its subcellular location is the secreted. Reversibly blocks Kv11/ERG potassium channels. The sequence is that of Potassium channel toxin gamma-KTx 4.11 from Centruroides noxius (Mexican scorpion).